The primary structure comprises 801 residues: Na(+)/H(+) antiporter subunit A1 (801 aa).

A run of 21 helical transmembrane segments spans residues 4–25, 30–49, 79–101, 108–127, 131–153, 166–188, 208–230, 243–265, 270–289, 302–324, 339–361, 373–395, 429–451, 472–494, 526–548, 589–611, 621–641, 646–668, 672–694, 707–729, and 767–784; these read LHIA…YRFF, LGWF…LTLI, LGLL…SIGY, LGNF…GVVL, VIIL…SFWR, LIIT…IPTQ, FIFA…PFYI, SAYL…MTPI, QGWV…WASL, AFST…ISYH, AAIF…TGAV, LGGL…LSMA, YLFP…KFIM, ILML…FPGI, AFLS…SYWV, NNLV…SVPF, IRIF…LILF, LFSI…FFKA, ALTQ…YHLP, LTNA…IAYG, and LFES…YTMI.

It belongs to the CPA3 antiporters (TC 2.A.63) subunit A family. In terms of assembly, may form a heterooligomeric complex that consists of seven subunits: mnhA1, mnhB1, mnhC1, mnhD1, mnhE1, mnhF1 and mnhG1.

It is found in the cell membrane. With respect to regulation, na(+) extrusion is completely inhibited by the H(+) conductor carbonyl cyanide m-chlorophenylhydrazone (CCCP). Its function is as follows. Mnh complex is a Na(+)/H(+) antiporter involved in Na(+) excretion. The chain is Na(+)/H(+) antiporter subunit A1 (mnhA1) from Staphylococcus aureus (strain MSSA476).